Reading from the N-terminus, the 547-residue chain is Serine beta-lactamase-like protein LACTB, mitochondrial (547 aa).

The N-terminal 115 residues, Met1–Leu115, are a transit peptide targeting the mitochondrion. The segment covering Gly62 to Pro83 has biased composition (low complexity). The disordered stretch occupies residues Gly62–Pro96. Ser164 acts as the Acyl-ester intermediate in catalysis. 2 positions are modified to N6-succinyllysine: Lys283 and Lys284. Lys297 and Lys342 each carry N6-acetyllysine.

Belongs to the peptidase S12 family. As to expression, expressed predominantly in skeletal muscle.

The protein resides in the mitochondrion. Mitochondrial serine protease that acts as a regulator of mitochondrial lipid metabolism. Acts by decreasing protein levels of PISD, a mitochondrial enzyme that converts phosphatidylserine (PtdSer) to phosphatidylethanolamine (PtdEtn), thereby affecting mitochondrial lipid metabolism. It is unclear whether it acts directly by mediating proteolysis of PISD or by mediating proteolysis of another lipid metabolism protein. Acts as a tumor suppressor that has the ability to inhibit proliferation of multiple types of breast cancer cells: probably by promoting decreased levels of PISD, thereby affecting mitochondrial lipid metabolism. The chain is Serine beta-lactamase-like protein LACTB, mitochondrial from Homo sapiens (Human).